Here is a 778-residue protein sequence, read N- to C-terminus: Ral guanine nucleotide dissociation stimulator-like 2 (778 aa).

Over residues 1-15 (MLPRPLRLLLDTTPP) the composition is skewed to low complexity. Residues 1–59 (MLPRPLRLLLDTTPPGGVVLSSFRSRDPEEGGDPGGRAVGGGQEEEDEEEEEASVSVWD) are disordered. Residues 33-42 (DPGGRAVGGG) are compositionally biased toward gly residues. The segment covering 43-59 (QEEEDEEEEEASVSVWD) has biased composition (acidic residues). Residues 88 to 212 (SSRRLRAGTL…GSADLIRNLR (125 aa)) form the N-terminal Ras-GEF domain. Positions 243–513 (LADHLAEQLT…HRVSCEVEPP (271 aa)) constitute a Ras-GEF domain. Disordered regions lie at residues 503-524 (SHRV…ARTP), 541-564 (GGPT…GTPA), 581-647 (SLDS…GPGS), and 735-769 (RRPS…IKAT). The segment covering 581–592 (SLDSALESSPSL) has biased composition (low complexity). Over residues 620–632 (CGSPLSGNTGEGT) the composition is skewed to polar residues. The region spanning 649-736 (DCRIIRVQME…HDFLLRQRRR (88 aa)) is the Ras-associating domain. The span at 738-756 (SAATPGSHSGPSASGTPPS) shows a compositional bias: low complexity.

In terms of assembly, interacts with SAMD9.

In terms of biological role, probable guanine nucleotide exchange factor. Putative effector of Ras and/or Rap. Associates with the GTP-bound form of Rap 1A and H-Ras in vitro. The chain is Ral guanine nucleotide dissociation stimulator-like 2 (Rgl2) from Mus musculus (Mouse).